The sequence spans 180 residues: Large ribosomal subunit protein uL5 (180 aa).

It belongs to the universal ribosomal protein uL5 family. In terms of assembly, part of the 50S ribosomal subunit; part of the 5S rRNA/L5/L18/L25 subcomplex. Contacts the 5S rRNA and the P site tRNA. Forms a bridge to the 30S subunit in the 70S ribosome.

Its function is as follows. This is one of the proteins that bind and probably mediate the attachment of the 5S RNA into the large ribosomal subunit, where it forms part of the central protuberance. In the 70S ribosome it contacts protein S13 of the 30S subunit (bridge B1b), connecting the 2 subunits; this bridge is implicated in subunit movement. Contacts the P site tRNA; the 5S rRNA and some of its associated proteins might help stabilize positioning of ribosome-bound tRNAs. This chain is Large ribosomal subunit protein uL5, found in Streptococcus agalactiae serotype Ia (strain ATCC 27591 / A909 / CDC SS700).